The following is a 90-amino-acid chain: UPF0237 protein MJ1558 (90 aa).

In terms of domain architecture, ACT spans 5–79 (VVSVIGQDRT…EELGVQVIVQ (75 aa)).

It belongs to the UPF0237 family.

The protein is UPF0237 protein MJ1558 of Methanocaldococcus jannaschii (strain ATCC 43067 / DSM 2661 / JAL-1 / JCM 10045 / NBRC 100440) (Methanococcus jannaschii).